A 261-amino-acid polypeptide reads, in one-letter code: uncharacterized protein (261 aa).

A run of 6 helical transmembrane segments spans residues 31–51 (TFLS…TGIV), 71–91 (TNVM…SWLL), 101–121 (LAYI…AGIA), 130–150 (LTSS…ASFI), 167–187 (LLLF…IPYV), and 213–233 (FAWL…YLAI).

It localises to the cell membrane. This is an uncharacterized protein from Mycoplasma genitalium (strain ATCC 33530 / DSM 19775 / NCTC 10195 / G37) (Mycoplasmoides genitalium).